The primary structure comprises 406 residues: Cysteine desulfurase (406 aa).

Residue K226 is modified to N6-(pyridoxal phosphate)lysine. The Cysteine persulfide intermediate role is filled by C364.

This sequence belongs to the class-V pyridoxal-phosphate-dependent aminotransferase family. Csd subfamily. In terms of assembly, homodimer. Interacts with SufE and the SufBCD complex composed of SufB, SufC and SufD. The interaction with SufE is required to mediate the direct transfer of the sulfur atom from the S-sulfanylcysteine. Pyridoxal 5'-phosphate is required as a cofactor.

It is found in the cytoplasm. It carries out the reaction (sulfur carrier)-H + L-cysteine = (sulfur carrier)-SH + L-alanine. The catalysed reaction is L-selenocysteine + AH2 = hydrogenselenide + L-alanine + A + H(+). Its pathway is cofactor biosynthesis; iron-sulfur cluster biosynthesis. Cysteine desulfurases mobilize the sulfur from L-cysteine to yield L-alanine, an essential step in sulfur metabolism for biosynthesis of a variety of sulfur-containing biomolecules. Component of the suf operon, which is activated and required under specific conditions such as oxidative stress and iron limitation. Acts as a potent selenocysteine lyase in vitro, that mobilizes selenium from L-selenocysteine. Selenocysteine lyase activity is however unsure in vivo. In Yersinia pseudotuberculosis serotype IB (strain PB1/+), this protein is Cysteine desulfurase.